Consider the following 267-residue polypeptide: MTNNTDKQTLKKLERQILRKTAQAINQYNMIEDGDKIMVCLSGGKDSYCLLEMLLLLQKKAPISFEIIAVNLDQKQPGFPEEVLPNYLKNKGVEFHIIQRDTYSVVKRVIPEGKTTCGLCSRMRRGILYDFAEENSVTKVALGHHRDDIIETFFLNLFYNGSIKAMPAKLLSDDKRNIVIRPLAFVSEKETLEYSQLKEFPIIPCNLCGSQDNLQRVFIKDMLNRWEQNNPERKNVIFKALSNISPSQMLDKELFDFINISKDDIQR.

Positions 42 to 47 (SGGKDS) match the PP-loop motif motif. The [4Fe-4S] cluster site is built by cysteine 117, cysteine 120, and cysteine 208.

This sequence belongs to the TtcA family. As to quaternary structure, homodimer. Mg(2+) serves as cofactor. It depends on [4Fe-4S] cluster as a cofactor.

Its subcellular location is the cytoplasm. It catalyses the reaction cytidine(32) in tRNA + S-sulfanyl-L-cysteinyl-[cysteine desulfurase] + AH2 + ATP = 2-thiocytidine(32) in tRNA + L-cysteinyl-[cysteine desulfurase] + A + AMP + diphosphate + H(+). It participates in tRNA modification. In terms of biological role, catalyzes the ATP-dependent 2-thiolation of cytidine in position 32 of tRNA, to form 2-thiocytidine (s(2)C32). The sulfur atoms are provided by the cysteine/cysteine desulfurase (IscS) system. The protein is tRNA-cytidine(32) 2-sulfurtransferase 1 of Francisella tularensis subsp. novicida (strain U112).